The sequence spans 362 residues: Very-long-chain (3R)-3-hydroxyacyl-CoA dehydratase 3 (362 aa).

Position 1 is an N-acetylmethionine (Met-1). The Cytoplasmic segment spans residues 1–149; the sequence is METQVLTPHV…ETLTNLKKGY (149 aa). Residues 5–94 enclose the CS domain; that stretch reads VLTPHVYWAQ…KGSHWWERLT (90 aa). Thr-7 bears the Phosphothreonine mark. Residues 111–138 adopt a coiled-coil conformation; that stretch reads LDESDAEMELRAKEEERLNKLRLEREGS. Residue Ser-114 is modified to Phosphoserine. A helical membrane pass occupies residues 150-170; sequence LFMYNLVQLLGFSWIFVNLTV. The Lumenal portion of the chain corresponds to 171–189; the sequence is RFFILGKESFYDTFHNVAD. The helical transmembrane segment at 190–210 threads the bilayer; it reads MMYFCQMLALVETLNAAIGVT. The Cytoplasmic segment spans residues 211 to 212; that stretch reads ST. The helical transmembrane segment at 213–233 threads the bilayer; the sequence is PVLPALIQFLGRNFILFLVFG. The Lumenal segment spans residues 234–242; that stretch reads TMEEMQNKA. Residues 243–263 form a helical membrane-spanning segment; it reads VVFFVFYSWSAIEIFRYPFYM. Over 264–280 the chain is Cytoplasmic; the sequence is LSCIDMDWKVLTWLRYT. Residues 281–301 form a helical membrane-spanning segment; that stretch reads MWIPLYPLGCLSEAVAVIQSI. Active-site residues include Tyr-286 and Glu-293. At 302–322 the chain is on the lumenal side; the sequence is PVFNESGRFSFTLPYPVKMKV. Residues 323–343 traverse the membrane as a helical segment; the sequence is RFSFFLQVYLVMLFLGLYINF. Residues 344 to 362 are Cytoplasmic-facing; sequence RHLYKQRRRRYGQKKKKLH.

The protein belongs to the very long-chain fatty acids dehydratase HACD family. As to quaternary structure, may interact with enzymes of the ELO family (including ELOVL1); with those enzymes that mediate condensation, the first of the four steps of the reaction cycle responsible for fatty acids elongation, may be part of a larger fatty acids elongase complex. Interacts with RAC1. Associates with internalized insulin receptor/INSR complexes on Golgi/endosomal membranes; HACD3/PTPLAD1 together with ATIC and PRKAA2/AMPK2 is proposed to be part of a signaling network regulating INSR autophosphorylation and endocytosis.

It is found in the endoplasmic reticulum membrane. The catalysed reaction is a very-long-chain (3R)-3-hydroxyacyl-CoA = a very-long-chain (2E)-enoyl-CoA + H2O. It catalyses the reaction (3R)-hydroxyhexadecanoyl-CoA = (2E)-hexadecenoyl-CoA + H2O. It participates in lipid metabolism; fatty acid biosynthesis. Functionally, catalyzes the third of the four reactions of the long-chain fatty acids elongation cycle. This endoplasmic reticulum-bound enzymatic process, allows the addition of two carbons to the chain of long- and very long-chain fatty acids/VLCFAs per cycle. This enzyme catalyzes the dehydration of the 3-hydroxyacyl-CoA intermediate into trans-2,3-enoyl-CoA, within each cycle of fatty acid elongation. Thereby, it participates in the production of VLCFAs of different chain lengths that are involved in multiple biological processes as precursors of membrane lipids and lipid mediators. Involved in Rac1-signaling pathways leading to the modulation of gene expression. Promotes insulin receptor/INSR autophosphorylation and is involved in INSR internalization. This Mus musculus (Mouse) protein is Very-long-chain (3R)-3-hydroxyacyl-CoA dehydratase 3.